The primary structure comprises 177 residues: UPF0114 protein HP_0189 (177 aa).

3 helical membrane-spanning segments follow: residues Trp15–Phe35, Leu54–Val74, and Pro145–Val165.

Belongs to the UPF0114 family.

It localises to the cell membrane. The polypeptide is UPF0114 protein HP_0189 (Helicobacter pylori (strain ATCC 700392 / 26695) (Campylobacter pylori)).